The sequence spans 161 residues: Allophycocyanin alpha chain 2 (161 aa).

Asn71 is subject to N4-methylasparagine. A (2R,3E)-phycocyanobilin-binding site is contributed by Cys81.

The protein belongs to the phycobiliprotein family. Component of the phycobilisome. Heterodimer of an alpha and a beta chain. Contains one covalently linked bilin chromophore.

It is found in the cellular thylakoid membrane. Functionally, light-harvesting photosynthetic bile pigment-protein from the phycobiliprotein complex. Allophycocyanin has a maximum absorption at approximately 650 nanometers. This chain is Allophycocyanin alpha chain 2 (apcA2), found in Microchaete diplosiphon (Fremyella diplosiphon).